The chain runs to 489 residues: Rhamnulokinase (489 aa).

13-17 (ASSGR) lines the ATP pocket. The cysteines at positions 68 and 222 are disulfide-linked. Substrate-binding positions include Gly-83 and 236-238 (HDT). The Proton acceptor role is filled by Asp-237. Position 259 (Thr-259) interacts with ATP. Asn-296 provides a ligand contact to substrate. Gln-304 is a binding site for ATP. A disulfide bond links Cys-353 and Cys-370. Gly-402 serves as a coordination point for ATP. An intrachain disulfide couples Cys-413 to Cys-417.

It belongs to the rhamnulokinase family. Mg(2+) serves as cofactor.

The catalysed reaction is L-rhamnulose + ATP = L-rhamnulose 1-phosphate + ADP + H(+). It participates in carbohydrate degradation; L-rhamnose degradation; glycerone phosphate from L-rhamnose: step 2/3. In terms of biological role, involved in the catabolism of L-rhamnose (6-deoxy-L-mannose). Catalyzes the transfer of the gamma-phosphate group from ATP to the 1-hydroxyl group of L-rhamnulose to yield L-rhamnulose 1-phosphate. The chain is Rhamnulokinase from Salmonella heidelberg (strain SL476).